The following is a 403-amino-acid chain: Acetyl-CoA acetyltransferase IA (403 aa).

Cys-91 (acyl-thioester intermediate) is an active-site residue. Catalysis depends on proton acceptor residues His-353 and Cys-383. The short motif at 401-403 is the Microbody targeting signal element; the sequence is AKL.

It belongs to the thiolase-like superfamily. Thiolase family. As to quaternary structure, multimeric.

Its subcellular location is the peroxisome. The catalysed reaction is 2 acetyl-CoA = acetoacetyl-CoA + CoA. It participates in metabolic intermediate biosynthesis; (R)-mevalonate biosynthesis; (R)-mevalonate from acetyl-CoA: step 1/3. The chain is Acetyl-CoA acetyltransferase IA (PACTA) from Candida tropicalis (Yeast).